The primary structure comprises 465 residues: Transposase for insertion sequence IS1202 (465 aa).

Positions 157 to 340 (HPSRPRKKFA…APNPSERNLI (184 aa)) constitute an Integrase catalytic domain.

In terms of biological role, required for the transposition of the insertion element. This chain is Transposase for insertion sequence IS1202, found in Streptococcus pneumoniae.